A 194-amino-acid polypeptide reads, in one-letter code: Putative 3-methyladenine DNA glycosylase (194 aa).

It belongs to the DNA glycosylase MPG family.

This is Putative 3-methyladenine DNA glycosylase from Mycolicibacterium fortuitum (Mycobacterium fortuitum).